Reading from the N-terminus, the 260-residue chain is Hydroxyethylthiazole kinase (260 aa).

Arg-126 and Ser-172 together coordinate ATP. Gly-199 contacts substrate.

The protein belongs to the Thz kinase family. It depends on Mg(2+) as a cofactor.

The catalysed reaction is 5-(2-hydroxyethyl)-4-methylthiazole + ATP = 4-methyl-5-(2-phosphooxyethyl)-thiazole + ADP + H(+). The protein operates within cofactor biosynthesis; thiamine diphosphate biosynthesis; 4-methyl-5-(2-phosphoethyl)-thiazole from 5-(2-hydroxyethyl)-4-methylthiazole: step 1/1. Functionally, catalyzes the phosphorylation of the hydroxyl group of 4-methyl-5-beta-hydroxyethylthiazole (THZ). The polypeptide is Hydroxyethylthiazole kinase (Burkholderia thailandensis (strain ATCC 700388 / DSM 13276 / CCUG 48851 / CIP 106301 / E264)).